Consider the following 280-residue polypeptide: Formamidopyrimidine-DNA glycosylase (280 aa).

The active-site Schiff-base intermediate with DNA is the Pro2. Residue Glu3 is the Proton donor of the active site. The Proton donor; for beta-elimination activity role is filled by Lys58. Residues His91, Arg110, and Arg152 each coordinate DNA. Residues 237-271 (NVYGRENLPCPQCDSAIEKVVLNQRAAYFCSNCQK) form an FPG-type zinc finger. The Proton donor; for delta-elimination activity role is filled by Arg261.

It belongs to the FPG family. Monomer. It depends on Zn(2+) as a cofactor.

The catalysed reaction is Hydrolysis of DNA containing ring-opened 7-methylguanine residues, releasing 2,6-diamino-4-hydroxy-5-(N-methyl)formamidopyrimidine.. It catalyses the reaction 2'-deoxyribonucleotide-(2'-deoxyribose 5'-phosphate)-2'-deoxyribonucleotide-DNA = a 3'-end 2'-deoxyribonucleotide-(2,3-dehydro-2,3-deoxyribose 5'-phosphate)-DNA + a 5'-end 5'-phospho-2'-deoxyribonucleoside-DNA + H(+). Its function is as follows. Involved in base excision repair of DNA damaged by oxidation or by mutagenic agents. Acts as a DNA glycosylase that recognizes and removes damaged bases. Has a preference for oxidized purines, such as 7,8-dihydro-8-oxoguanine (8-oxoG). Has AP (apurinic/apyrimidinic) lyase activity and introduces nicks in the DNA strand. Cleaves the DNA backbone by beta-delta elimination to generate a single-strand break at the site of the removed base with both 3'- and 5'-phosphates. The protein is Formamidopyrimidine-DNA glycosylase of Hydrogenovibrio crunogenus (strain DSM 25203 / XCL-2) (Thiomicrospira crunogena).